The sequence spans 479 residues: Probable cytosol aminopeptidase (479 aa).

Positions 247 and 252 each coordinate Mn(2+). Lys259 is an active-site residue. Mn(2+) is bound by residues Asp270, Asp329, and Glu331. The active site involves Arg333.

The protein belongs to the peptidase M17 family. Mn(2+) is required as a cofactor.

It is found in the cytoplasm. It carries out the reaction Release of an N-terminal amino acid, Xaa-|-Yaa-, in which Xaa is preferably Leu, but may be other amino acids including Pro although not Arg or Lys, and Yaa may be Pro. Amino acid amides and methyl esters are also readily hydrolyzed, but rates on arylamides are exceedingly low.. The catalysed reaction is Release of an N-terminal amino acid, preferentially leucine, but not glutamic or aspartic acids.. Its function is as follows. Presumably involved in the processing and regular turnover of intracellular proteins. Catalyzes the removal of unsubstituted N-terminal amino acids from various peptides. The chain is Probable cytosol aminopeptidase from Vesicomyosocius okutanii subsp. Calyptogena okutanii (strain HA).